We begin with the raw amino-acid sequence, 234 residues long: Sugar fermentation stimulation protein A (234 aa).

Positions 201–220 (LLSEAQNKGVEVLAYKAELS) form a DNA-binding region, H-T-H motif.

This sequence belongs to the SfsA family.

Functionally, binds to DNA non-specifically. Could be a regulatory factor involved in maltose metabolism. This chain is Sugar fermentation stimulation protein A, found in Salmonella arizonae (strain ATCC BAA-731 / CDC346-86 / RSK2980).